The chain runs to 231 residues: Uracil phosphoribosyltransferase (231 aa).

Lysine 38–arginine 42 lines the GTP pocket. 5-phospho-alpha-D-ribose 1-diphosphate-binding positions include arginine 87, arginine 112, and aspartate 140–threonine 148. Uracil is bound by residues isoleucine 203 and glycine 208–alanine 210. Aspartate 209 is a 5-phospho-alpha-D-ribose 1-diphosphate binding site.

This sequence belongs to the UPRTase family. Requires Mg(2+) as cofactor.

The catalysed reaction is UMP + diphosphate = 5-phospho-alpha-D-ribose 1-diphosphate + uracil. It functions in the pathway pyrimidine metabolism; UMP biosynthesis via salvage pathway; UMP from uracil: step 1/1. With respect to regulation, allosterically activated by GTP. Its function is as follows. Catalyzes the conversion of uracil and 5-phospho-alpha-D-ribose 1-diphosphate (PRPP) to UMP and diphosphate. The polypeptide is Uracil phosphoribosyltransferase (Methanococcus maripaludis (strain C6 / ATCC BAA-1332)).